We begin with the raw amino-acid sequence, 118 residues long: Telomere bouquet protein 2 (118 aa).

In terms of assembly, interacts with bqt1. The bqt1-bqt2-sad1 complex binds rap1.

The protein localises to the cytoplasm. Its subcellular location is the nucleus. It is found in the cytoskeleton. It localises to the microtubule organizing center. The protein resides in the spindle pole body. The protein localises to the chromosome. Its subcellular location is the telomere. Involved in chromosome segregation. During meiotic prophase, connects telomeres to the spindle pole body by forming a bridge between the telomere protein rap1 and the spindle pole body protein sad1. The chain is Telomere bouquet protein 2 (bqt2) from Schizosaccharomyces pombe (strain 972 / ATCC 24843) (Fission yeast).